The primary structure comprises 397 residues: SET domain-containing protein 4 (397 aa).

Residues Ala29–Gly245 enclose the SET domain. Tyr244 is an S-adenosyl-L-methionine binding site.

It belongs to the class V-like SAM-binding methyltransferase superfamily. SETD4 family.

The protein resides in the nucleus. It catalyses the reaction L-lysyl(79)-[histone H3] + 3 S-adenosyl-L-methionine = N(6),N(6),N(6)-trimethyl-L-lysyl(79)-[histone H3] + 3 S-adenosyl-L-homocysteine + 3 H(+). The enzyme catalyses L-lysyl(20)-[histone H4] + S-adenosyl-L-methionine = N(6)-methyl-L-lysyl(20)-[histone H4] + S-adenosyl-L-homocysteine + H(+). It carries out the reaction N(6)-methyl-L-lysyl(20)-[histone H4] + S-adenosyl-L-methionine = N(6),N(6)-dimethyl-L-lysyl(20)-[histone H4] + S-adenosyl-L-homocysteine + H(+). The catalysed reaction is N(6),N(6)-dimethyl-L-lysyl(20)-[histone H4] + S-adenosyl-L-methionine = N(6),N(6),N(6)-trimethyl-L-lysyl(20)-[histone H4] + S-adenosyl-L-homocysteine + H(+). In terms of biological role, protein-lysine N-methyltransferase involved in the regulation of cell quiescence by catalyzing the trimethylation of 'Lys-20' of histone H4 and 'Lys-79' of histone H3 (H4K20me3 and H3K79me3, respectively) during diapause formation, a state of obligate dormancy. This is SET domain-containing protein 4 from Artemia parthenogenetica (Brine shrimp).